Here is a 138-residue protein sequence, read N- to C-terminus: Small ribosomal subunit protein uS12 (138 aa).

D89 is subject to 3-methylthioaspartic acid. Residues V107–K138 are disordered.

This sequence belongs to the universal ribosomal protein uS12 family. In terms of assembly, part of the 30S ribosomal subunit. Contacts proteins S8 and S17. May interact with IF1 in the 30S initiation complex.

With S4 and S5 plays an important role in translational accuracy. Functionally, interacts with and stabilizes bases of the 16S rRNA that are involved in tRNA selection in the A site and with the mRNA backbone. Located at the interface of the 30S and 50S subunits, it traverses the body of the 30S subunit contacting proteins on the other side and probably holding the rRNA structure together. The combined cluster of proteins S8, S12 and S17 appears to hold together the shoulder and platform of the 30S subunit. In Azobacteroides pseudotrichonymphae genomovar. CFP2, this protein is Small ribosomal subunit protein uS12.